Here is a 115-residue protein sequence, read N- to C-terminus: NADH-ubiquinone oxidoreductase chain 3 (115 aa).

3 consecutive transmembrane segments (helical) span residues 3 to 23 (LFVA…VAFW), 55 to 75 (FFLV…LLPL), and 84 to 104 (LSAM…GLIY).

Belongs to the complex I subunit 3 family. Core subunit of respiratory chain NADH dehydrogenase (Complex I) which is composed of 45 different subunits. Interacts with TMEM186. Interacts with TMEM242.

The protein resides in the mitochondrion inner membrane. It carries out the reaction a ubiquinone + NADH + 5 H(+)(in) = a ubiquinol + NAD(+) + 4 H(+)(out). Its function is as follows. Core subunit of the mitochondrial membrane respiratory chain NADH dehydrogenase (Complex I) which catalyzes electron transfer from NADH through the respiratory chain, using ubiquinone as an electron acceptor. Essential for the catalytic activity of complex I. The chain is NADH-ubiquinone oxidoreductase chain 3 from Sigmodon hispidus (Hispid cotton rat).